Here is a 580-residue protein sequence, read N- to C-terminus: Arginine--tRNA ligase (580 aa).

The 'HIGH' region motif lies at 123–133 (PNIAKEMHVGH).

This sequence belongs to the class-I aminoacyl-tRNA synthetase family. As to quaternary structure, monomer.

It localises to the cytoplasm. The enzyme catalyses tRNA(Arg) + L-arginine + ATP = L-arginyl-tRNA(Arg) + AMP + diphosphate. This Buchnera aphidicola subsp. Schizaphis graminum (strain Sg) protein is Arginine--tRNA ligase (argS).